The sequence spans 784 residues: ATP-dependent 6-phosphofructokinase, platelet type (784 aa).

The residue at position 1 (methionine 1) is an N-acetylmethionine. The segment at 1–399 is N-terminal catalytic PFK domain 1; the sequence is MDADDSRAPK…NLNTYKRLAI (399 aa). Phosphoserine occurs at positions 6, 12, and 21. ATP is bound by residues glycine 34, 97-98, and 127-130; these read RC and GDGS. Aspartate 128 contacts Mg(2+). Phosphoserine is present on serine 142. Substrate is bound by residues 173–175, arginine 210, 217–219, glutamate 273, arginine 301, and 307–310; these read SID, MGR, and HVQR. The active-site Proton acceptor is the aspartate 175. The residue at position 386 (serine 386) is a Phosphoserine. Lysine 395 is subject to N6-acetyllysine. The segment at 400–411 is interdomain linker; that stretch reads KLPDDQIPKTNC. Residues 412 to 784 form a C-terminal regulatory PFK domain 2 region; it reads NVAVINVGAP…QLEHVQPWSV (373 aa). A beta-D-fructose 2,6-bisphosphate-binding site is contributed by arginine 481. Lysine 486 is modified (N6-acetyllysine). Beta-D-fructose 2,6-bisphosphate is bound by residues 538-542, arginine 576, 583-585, and glutamate 639; these read TVSNN and MGG. O-linked (GlcNAc) serine glycosylation occurs at serine 540. Tyrosine 651 carries the phosphotyrosine modification. Beta-D-fructose 2,6-bisphosphate-binding positions include arginine 665 and 671–674; that span reads HMQQ. Position 688 is an N6-acetyllysine (lysine 688). A beta-D-fructose 2,6-bisphosphate-binding site is contributed by arginine 744. Residue serine 783 is modified to Phosphoserine.

This sequence belongs to the phosphofructokinase type A (PFKA) family. ATP-dependent PFK group I subfamily. Eukaryotic two domain clade 'E' sub-subfamily. As to quaternary structure, homo- and heterotetramers. Phosphofructokinase (PFK) enzyme functions as a tetramer composed of different combinations of 3 types of subunits, called PFKM (M), PFKL (L) and PFKP (P). The composition of the PFK tetramer differs according to the tissue type it is present in. The kinetic and regulatory properties of the tetrameric enzyme are dependent on the subunit composition, hence can vary across tissues. Interacts with ATG4B; promoting phosphorylation of ATG4B. Requires Mg(2+) as cofactor. GlcNAcylation decreases enzyme activity. In terms of processing, phosphorylation at Ser-386 promotes interaction with ATG4B.

It localises to the cytoplasm. It catalyses the reaction beta-D-fructose 6-phosphate + ATP = beta-D-fructose 1,6-bisphosphate + ADP + H(+). It functions in the pathway carbohydrate degradation; glycolysis; D-glyceraldehyde 3-phosphate and glycerone phosphate from D-glucose: step 3/4. Allosterically activated by ADP, AMP, or fructose 2,6-bisphosphate, and allosterically inhibited by ATP or citrate. Its function is as follows. Catalyzes the phosphorylation of D-fructose 6-phosphate to fructose 1,6-bisphosphate by ATP, the first committing step of glycolysis. The sequence is that of ATP-dependent 6-phosphofructokinase, platelet type (PFKP) from Pongo abelii (Sumatran orangutan).